Consider the following 671-residue polypeptide: MGQVHLHNRSFNKATSAGFLIALGIVYGDIGTSPLYAMQAIVRGQGGLANLSESFILGAVSLVIWTLTLITTVKYVLIALKADNHHEGGIFSLFTLVRRMRKWLIVPAMIGGATLLADGALTPAVTVTSAIEGLRGVTHVYSNQTTVMVTTLIILAFLFLIQRFGASLVGRLFGPIMFIWFGFLGVSGLINSFLDLSILKAINPYYAIHLLFSPENKAGFFILGSIFLVTTGAEALYSDLGHVGRGNIYVSWPFVKICIILSYCGQGAWLLAHRGEHIEKLNPFFAVLPDNMVIYVVILSTLAAIIASQALISGSFTLVSEAIRLKLLPLFKIYYPGQTLGQLYIPAVNFALWVTTSFFVLYFKTSEHMEAAYSLAITITMLMTTTLLTYFLIQKGTPKIAIAFISIGLFCIEGSFFAASLVQFINGAYIVVLIALAIIFVMFIWNKSHKIVMKYIKSLNINEYKNQLNALRHDESYDLYQTNVVYLTSKMDHEWIDRSILYSILDKRPKRAECYWFVNVKVTDEPYTSEYKVDMMDTDFIVRVNLYLGFRMRQEVPRYLRTIVTDLMESGRLPRQHQHYSITPGRKVGDFRFVVVEEKLMNARQMPGFERFVLQTKAQIKRITASPIRWFGLQFSEVTVETVPLVLSDVRNLEIHERLEQVDETEAPATN.

The next 12 membrane-spanning stretches (helical) occupy residues 18-38 (GFLI…LYAM), 60-80 (VSLV…LIAL), 103-123 (WLIV…ALTP), 149-169 (VTTL…ASLV), 173-193 (FGPI…INSF), 218-238 (AGFF…ALYS), 252-272 (WPFV…WLLA), 292-312 (MVIY…QALI), 343-363 (LYIP…VLYF), 373-393 (YSLA…YFLI), 402-422 (IAFI…ASLV), and 424-444 (FING…VMFI).

Belongs to the HAK/KUP transporter (TC 2.A.72) family.

The protein resides in the cell membrane. The catalysed reaction is K(+)(in) + H(+)(in) = K(+)(out) + H(+)(out). In terms of biological role, transport of potassium into the cell. Likely operates as a K(+):H(+) symporter. The polypeptide is Probable potassium transport system protein Kup 2 (Lactococcus lactis subsp. cremoris (strain MG1363)).